A 302-amino-acid chain; its full sequence is Putative T-box protein 34 (302 aa).

Residues 5 to 180 (IVNEHKYREL…KMNLAPGSSQ (176 aa)) constitute a DNA-binding region (T-box).

The protein localises to the nucleus. The chain is Putative T-box protein 34 (tbx-34) from Caenorhabditis elegans.